The sequence spans 281 residues: MQKKYYELFFIVEERYKNLFLDFAFDLGIEAIEEKDNGVYIRSHESLEEFSWALEIFAQKLTTTFNLNHKIISNLSLVEKENKDWIQEYKKGIKPILVDNVYIHTTWQEEKKNCINIKINPALAFGSGHHESTYSCVKFLQKFSKSKLRALDLGCGSGILGIIMAKFGCNVEICDTDELAIDSSLENARLNGVDFHKAWCGSIDKANGLYNLIVANIIADVILILEKDIKNHLEDNAILILSGILDKYSTRIKEKFQDLELIDEIQINEWCSFVYKNNKKG.

The S-adenosyl-L-methionine site is built by Thr-133, Gly-154, Asp-175, and Asn-216.

Belongs to the methyltransferase superfamily. PrmA family.

It is found in the cytoplasm. The catalysed reaction is L-lysyl-[protein] + 3 S-adenosyl-L-methionine = N(6),N(6),N(6)-trimethyl-L-lysyl-[protein] + 3 S-adenosyl-L-homocysteine + 3 H(+). In terms of biological role, methylates ribosomal protein L11. The chain is Ribosomal protein L11 methyltransferase from Campylobacter jejuni (strain RM1221).